Here is a 211-residue protein sequence, read N- to C-terminus: Small ribosomal subunit protein uS3 (211 aa).

The region spanning 16 to 85 (IDEYFKTKLV…NPQIEVKQVE (70 aa)) is the KH type-2 domain.

Belongs to the universal ribosomal protein uS3 family. As to quaternary structure, part of the 30S ribosomal subunit.

Functionally, binds the lower part of the 30S subunit head. The sequence is that of Small ribosomal subunit protein uS3 from Methanococcus maripaludis (strain DSM 14266 / JCM 13030 / NBRC 101832 / S2 / LL).